Reading from the N-terminus, the 438-residue chain is MNTNHIRTVKGGGSLQGILNVPGDKSISHRSLIIGSIAEGETNIKGFLYSDDPLSTADCLRKLGVNIPEIKKNQPFTIKGLGIDDFKEPEEILDCGNSGTTMRLLMGLLAGQEGRNFILTGDKSLNERPMGRVSKPLSLMGGIIHGRKNGTKAPISITGNKLKGCVIGTPVASAQVKSAILLAGLNASGTTSVIEPASSRDHTERMLKAFGADINIRGELGRNIVIKSGTNLTGQNILIPGDISSAAFWMIAASIVPESEIIIKNVGLNPTRTGILNVMNEMGCNYEILDKSTIAGEPIGSINIKYVSNLKPFKVEGDILPKLIDEIPILAVAACFCSGVSEIKDAKELRVKETDRLKVMATQLKKFGANILEKEDGLIINGESKFHSAEVDSETDHRVSMSLAIASLLAKGSSKIARAEASRVSYPTFWDDLEKLIN.

3 residues coordinate 3-phosphoshikimate: lysine 25, serine 26, and arginine 30. Residue lysine 25 coordinates phosphoenolpyruvate. 2 residues coordinate phosphoenolpyruvate: glycine 99 and arginine 128. 3-phosphoshikimate contacts are provided by serine 173, glutamine 175, aspartate 325, and lysine 352. Glutamine 175 is a phosphoenolpyruvate binding site. Aspartate 325 (proton acceptor) is an active-site residue. Positions 356 and 398 each coordinate phosphoenolpyruvate.

This sequence belongs to the EPSP synthase family. As to quaternary structure, monomer.

It localises to the cytoplasm. It catalyses the reaction 3-phosphoshikimate + phosphoenolpyruvate = 5-O-(1-carboxyvinyl)-3-phosphoshikimate + phosphate. It participates in metabolic intermediate biosynthesis; chorismate biosynthesis; chorismate from D-erythrose 4-phosphate and phosphoenolpyruvate: step 6/7. In terms of biological role, catalyzes the transfer of the enolpyruvyl moiety of phosphoenolpyruvate (PEP) to the 5-hydroxyl of shikimate-3-phosphate (S3P) to produce enolpyruvyl shikimate-3-phosphate and inorganic phosphate. The chain is 3-phosphoshikimate 1-carboxyvinyltransferase from Prochlorococcus marinus subsp. pastoris (strain CCMP1986 / NIES-2087 / MED4).